A 277-amino-acid polypeptide reads, in one-letter code: Methyltransferase str3 (277 aa).

It belongs to the methyltransferase superfamily. LaeA methyltransferase family.

It participates in mycotoxin biosynthesis. Functionally, methyltransferase; part of the gene cluster that mediates the biosynthesis of strobilurin A, an antifungal polyketide that contains a key beta-methoxyacrylate toxophore that targets the complex III of the mitochondrial electron transport chain. Strobilurin biosynthesis begins with construction of benzoyl CoA by step-wise elimination of ammonia from phenylalanine by the phenylalanine ammonia-lyase str11, oxygenation by str8 and retro-Claisen reaction to form benzoic acid, which is activated to its CoA thiolester benzoyl CoA by the dedicated CoA ligase str10. Benzoyl CoA forms the starter unit for the highly reducing polyketide synthase stpks1 that produces the polyketide prestrobilutin A. The FAD-dependent oxygenase str9 then catalyzes the key oxidative rearrangement responsible for the creation of the beta-methoxyacrylate toxophore. Str9 performs epoxidation of the 2,3 olefin of prestrobilutin A, followed by Meinwald rearrangement to furnish the aldehyde intermediate. Rapid enolization of the aldehyde intermediate would give the beta-methoxyacrylate skeleton and methylations catalyzed by str2 and str3 complete the synthesis and lead to the production of strobilurin A. The short-chain dehydrogenase stl2 and the dehydrogenase str4 play a role in the shunt pathway leading to the production of bolineol. The cluster encodes no obvious halogenase gene that could be involved in production of strobilurin B, nor any obvious dimethylallyl-transferase that could be involved in the production of strobilurin G. It is possible that unknown proteins encoded in, or near, the cluster (such as str1 or stl1) may form new classes of halogenases or dimethylally-transferases, or that the responsible genes are located elsewhere on the genome. Similarly, proteins encoded by str5/str6 hydrolases appear to have no chemical role in the biosynthesis of strobilurin A. Finally, no obvious self-resistance gene is found within the cluster. This Strobilurus tenacellus protein is Methyltransferase str3.